A 1107-amino-acid polypeptide reads, in one-letter code: Dynein axonemal assembly factor 1 homolog (1107 aa).

LRR repeat units follow at residues 34–56 (HLNDILYLNYSGYNAIESLEEYV), 57–78 (GLKCLWLECNAISEIKGLEYQT), 79–100 (ELKCLYLQNNLITKIENLDSCK), 101–122 (QLDTLNLSHNHITRIENCGHDI), 125–146 (VLNTLNLSHNYLKTADNLDHLR), and 150–171 (FVSVLDLSHNRIEDIAIVKILG). One can recognise an LRRCT domain in the interval 184-223 (NPVVNEIPSYRKTLILECKNLTYLDTRPVFDRDRACAEAW). Disordered stretches follow at residues 258–281 (HRGDGEPELLKTSSDEEDEDKASK), 428–487 (NESP…TLNV), 500–608 (ESKD…LEKE), 780–810 (KEEPKAPETPSIESEEEIPEELEVHSSEHEQ), 834–855 (SSEDLKSNFDDSSESSDSAEED), and 1070–1107 (AAHAGEVMQDTEDVESKPVEIDGTKEETVDSELADNCD). A compositionally biased stretch (polar residues) spans 428–437 (NESPLTSPSF). Positions 446–459 (EEIEPTDVEEEQQI) are enriched in acidic residues. The segment covering 500 to 512 (ESKDGELISKVES) has biased composition (basic and acidic residues). Residues 531-544 (DNSESEPTDITNED) show a composition bias toward acidic residues. The span at 549 to 560 (SSSVSVTSSTDS) shows a compositional bias: low complexity. A compositionally biased stretch (polar residues) spans 581 to 597 (NYRQDSTTSTDSENEVS). Basic and acidic residues predominate over residues 801-810 (LEVHSSEHEQ). Residues 844–855 (DSSESSDSAEED) show a composition bias toward acidic residues. Positions 1083 to 1097 (VESKPVEIDGTKEET) are enriched in basic and acidic residues. The span at 1098-1107 (VDSELADNCD) shows a compositional bias: acidic residues.

Belongs to the DNAAF1 family.

It localises to the cell projection. The protein resides in the cilium. In terms of biological role, cilium-specific protein required for cilia structures. In Aedes aegypti (Yellowfever mosquito), this protein is Dynein axonemal assembly factor 1 homolog.